The chain runs to 382 residues: Galactokinase (382 aa).

A substrate-binding site is contributed by 34–37 (EHTD). Position 124 to 130 (124 to 130 (GAGLSSS)) interacts with ATP. Residues Ser130 and Glu162 each contribute to the Mg(2+) site. Asp174 acts as the Proton acceptor in catalysis. Tyr223 provides a ligand contact to substrate.

It belongs to the GHMP kinase family. GalK subfamily.

The protein resides in the cytoplasm. It catalyses the reaction alpha-D-galactose + ATP = alpha-D-galactose 1-phosphate + ADP + H(+). Its pathway is carbohydrate metabolism; galactose metabolism. Catalyzes the transfer of the gamma-phosphate of ATP to D-galactose to form alpha-D-galactose-1-phosphate (Gal-1-P). The protein is Galactokinase of Cronobacter sakazakii (strain ATCC BAA-894) (Enterobacter sakazakii).